The sequence spans 212 residues: MTVGILGTKLGMTQIFDEAGRSVPITVVQAGPCPITQIKTPQTDGYTAIQVAYGEVREKNLSRPERGHLNKSQTPPMRHLREFRLEDVSAYQLGQAITVDIFSPGQLVDVRGTSIGRGFAGYQKRHNFKRGPMAHGSKNHRLPGSTGAGTTPGRVFPGKRMAGRMGNTAVTIRKLQVMRVDPERNLILIKGALPGKPGALVSITPAKVVGRK.

The interval 127 to 161 (NFKRGPMAHGSKNHRLPGSTGAGTTPGRVFPGKRM) is disordered.

The protein belongs to the universal ribosomal protein uL3 family. Part of the 50S ribosomal subunit. Forms a cluster with proteins L14 and L19.

In terms of biological role, one of the primary rRNA binding proteins, it binds directly near the 3'-end of the 23S rRNA, where it nucleates assembly of the 50S subunit. This chain is Large ribosomal subunit protein uL3, found in Thermosynechococcus vestitus (strain NIES-2133 / IAM M-273 / BP-1).